A 174-amino-acid polypeptide reads, in one-letter code: Gamma-crystallin C (174 aa).

Beta/gamma crystallin 'Greek key' domains are found at residues glycine 2 to serine 40 and glycine 41 to proline 83. Cysteine 23 carries the post-translational modification S-methylcysteine. The interval histidine 84–serine 87 is connecting peptide. 2 consecutive Beta/gamma crystallin 'Greek key' domains span residues histidine 88–glutamate 128 and glycine 129–valine 171.

The protein belongs to the beta/gamma-crystallin family.

Crystallins are the dominant structural components of the vertebrate eye lens. This is Gamma-crystallin C (Crygc) from Rattus norvegicus (Rat).